The sequence spans 472 residues: Cannabinoid receptor 1 (472 aa).

The Extracellular portion of the chain corresponds to 1–116 (MKSILDGLAD…CFMILNPSQQ (116 aa)). A required for mitochondrial localization region spans residues 2–23 (KSILDGLADTTFRTITTDLLYV). N-linked (GlcNAc...) asparagine glycans are attached at residues Asn-77 and Asn-83. The helical transmembrane segment at 117 to 142 (LAIAVLSLTLGTFTVLENLLVLCVIL) threads the bilayer. The Cytoplasmic segment spans residues 143 to 154 (HSRSLRCRPSYH). The helical transmembrane segment at 155-175 (FIGSLAVADLLGSVIFVYSFV) threads the bilayer. Residues 176-187 (DFHVFHRKDSPN) are Extracellular-facing. A helical transmembrane segment spans residues 188-212 (VFLFKLGGVTASFTASVGSLFLTAI). At 213–232 (DRYISIHRPLAYKKIVTRPK) the chain is on the cytoplasmic side. Residues 233 to 255 (AVVAFCLMWTIAIVIAVLPLLGW) form a helical membrane-spanning segment. At 256–273 (NCKKLQSVCSDIFPLIDE) the chain is on the extracellular side. Residues 274 to 299 (TYLMFWIGVTSVLLLFIVYAYMYILW) form a helical membrane-spanning segment. The Cytoplasmic segment spans residues 300-344 (KAHIHAVRMIQRGTQKSIIIHTSEDGKVQVTRPDQARMDIRLAKT). A helical transmembrane segment spans residues 345–365 (LVLILVVLIICWGPLLAIMVY). At 366-377 (DVFGKMNKLIKT) the chain is on the extracellular side. A helical membrane pass occupies residues 378–399 (VFAFCSMLCLLNSTVNPIIYAL). The Cytoplasmic segment spans residues 400 to 472 (RSKDLRHAFR…VSTNTSAKAL (73 aa)). The S-palmitoyl cysteine moiety is linked to residue Cys-415. Ser-425 and Ser-429 each carry phosphoserine.

Belongs to the G-protein coupled receptor 1 family. As to quaternary structure, interacts (via C-terminus) with CNRIP1; this interaction attenuates constitutive, but not agonist-dependent, inhibition of voltage-gated Ca(2+) channels in neurons. Associates with G protein alpha subunits, including G(i) alpha-1/GNAI1, G(i) alpha-3/GNAI3 and G(o)-alpha/GNAO1; palmitoylation is important for interaction with GNAI3 and GNAO1. Palmitoylation at Cys-415 is important for recruitment at plasma membrane and lipid rafts and association with G protein alpha subunits. As to expression, expressed in cerebral arterial muscle cells and cerebral cortex (at protein level).

It is found in the cell membrane. It localises to the membrane raft. The protein resides in the mitochondrion outer membrane. The protein localises to the cell projection. Its subcellular location is the axon. It is found in the presynapse. With respect to regulation, hemopressin, a peptide derived from hemoglobin subunit alpha (HBA1 and/or HBA2), acts as an antagonist peptide: hemopressin-binding efficiently blocks cannabinoid receptor CNR1 and subsequent signaling. Its function is as follows. G-protein coupled receptor for endogenous cannabinoids (eCBs), including N-arachidonoylethanolamide (also called anandamide or AEA) and 2-arachidonoylglycerol (2-AG), as well as phytocannabinoids, such as delta(9)-tetrahydrocannabinol (THC). Mediates many cannabinoid-induced effects, acting, among others, on food intake, memory loss, gastrointestinal motility, catalepsy, ambulatory activity, anxiety, chronic pain. Signaling typically involves reduction in cyclic AMP. In the hypothalamus, may have a dual effect on mitochondrial respiration depending upon the agonist dose and possibly upon the cell type. Increases respiration at low doses, while decreases respiration at high doses. At high doses, CNR1 signal transduction involves G-protein alpha-i protein activation and subsequent inhibition of mitochondrial soluble adenylate cyclase, decrease in cyclic AMP concentration, inhibition of protein kinase A (PKA)-dependent phosphorylation of specific subunits of the mitochondrial electron transport system, including NDUFS2. In the hypothalamus, inhibits leptin-induced reactive oxygen species (ROS) formation and mediates cannabinoid-induced increase in SREBF1 and FASN gene expression. In response to cannabinoids, drives the release of orexigenic beta-endorphin, not that of melanocyte-stimulating hormone alpha/alpha-MSH, from hypothalamic POMC neurons, hence promoting food intake. In the hippocampus, regulates cellular respiration and energy production in response to cannabinoids. Involved in cannabinoid-dependent depolarization-induced suppression of inhibition (DSI), a process in which depolarization of CA1 postsynaptic pyramidal neurons mobilizes eCBs, which retrogradely activate presynaptic CB1 receptors, transiently decreasing GABAergic inhibitory neurotransmission. Also reduces excitatory synaptic transmission. In superior cervical ganglions and cerebral vascular smooth muscle cells, inhibits voltage-gated Ca(2+) channels in a constitutive, as well as agonist-dependent manner. In cerebral vascular smooth muscle cells, inhibition of voltage-gated Ca(2+) channels leads to vasodilation and decrease in vascular tone. Induces leptin production in adipocytes and reduces LRP2-mediated leptin clearance in the kidney, hence participating in hyperleptinemia. In adipose tissue, CNR1 signaling leads to increased expression of SREBF1, ACACA and FASN genes. In the liver, activation by endocannabinoids leads to increased de novo lipogenesis and reduced fatty acid catabolism, associated with increased expression of SREBF1/SREBP-1, GCK, ACACA, ACACB and FASN genes. May also affect de novo cholesterol synthesis and HDL-cholesteryl ether uptake. Peripherally modulates energy metabolism. In high carbohydrate diet-induced obesity, may decrease the expression of mitochondrial dihydrolipoyl dehydrogenase/DLD in striated muscles, as well as that of selected glucose/ pyruvate metabolic enzymes, hence affecting energy expenditure through mitochondrial metabolism. In response to cannabinoid anandamide, elicits a pro-inflammatory response in macrophages, which involves NLRP3 inflammasome activation and IL1B and IL18 secretion. In macrophages infiltrating pancreatic islets, this process may participate in the progression of type-2 diabetes and associated loss of pancreatic beta-cells. In Felis catus (Cat), this protein is Cannabinoid receptor 1 (CNR1).